The primary structure comprises 544 residues: Probable protein kinase UbiB (544 aa).

One can recognise a Protein kinase domain in the interval 123–501; that stretch reads DFDIEPLASA…KRQQATGKFL (379 aa). ATP is bound by residues 129 to 137 and K152; that span reads LASASIAQV. The active-site Proton acceptor is the D287. The chain crosses the membrane as a helical span at residues 500–520; the sequence is FLFGVGATLVVCSAILVSSPY.

It belongs to the ABC1 family. UbiB subfamily.

The protein localises to the cell inner membrane. Its pathway is cofactor biosynthesis; ubiquinone biosynthesis [regulation]. Its function is as follows. Is probably a protein kinase regulator of UbiI activity which is involved in aerobic coenzyme Q (ubiquinone) biosynthesis. The protein is Probable protein kinase UbiB of Vibrio atlanticus (strain LGP32) (Vibrio splendidus (strain Mel32)).